The sequence spans 66 residues: UPF0337 protein SpyM3_1723 (66 aa).

Positions 1–10 are enriched in basic and acidic residues; that stretch reads MSEEKLKSKI. The interval 1 to 23 is disordered; it reads MSEEKLKSKIEQASGGLKEGAGK.

It belongs to the UPF0337 (CsbD) family.

In Streptococcus pyogenes serotype M3 (strain ATCC BAA-595 / MGAS315), this protein is UPF0337 protein SpyM3_1723.